The following is a 2019-amino-acid chain: Sodium channel protein type 5 subunit alpha (2019 aa).

The Cytoplasmic segment spans residues 1 to 129; the sequence is MANFLLPRGT…VRRAAVKILV (129 aa). The disordered stretch occupies residues 27–66; the sequence is RMAEKQARGSATSQESREGLPEEEAPRPQLDLQASKKLPD. Serine 36 is modified (phosphoserine). Threonine 38 is subject to Phosphothreonine. Residues 41–52 are compositionally biased toward basic and acidic residues; sequence ESREGLPEEEAP. The I repeat unit spans residues 113–420; the sequence is VLSPFHPVRR…VVAMAYEEQN (308 aa). A helical membrane pass occupies residues 130 to 149; it reads HSLFSMLIMCTILTNCVFMA. Over 150–157 the chain is Extracellular; sequence QHDPPPWT. Residues 158–179 traverse the membrane as a helical segment; it reads KYVEYTFTAIYTFESLVKILAR. Residues 180 to 188 lie on the Cytoplasmic side of the membrane; sequence GFCLHAFTF. Residues 189-209 traverse the membrane as a helical segment; it reads LRDPWNWLDFSVIVMAYTTEF. Topologically, residues 210 to 216 are extracellular; sequence VDLGNVS. Asparagine 214 carries N-linked (GlcNAc...) asparagine glycosylation. The chain crosses the membrane as a helical span at residues 217-236; it reads ALRTFRVLRALKTISVISGL. At 237-249 the chain is on the cytoplasmic side; that stretch reads KTIVGALIQSVKK. Residues 250-272 form a helical membrane-spanning segment; the sequence is LADVMVLTVFCLSVFALIGLQLF. Residues 273 to 357 lie on the Extracellular side of the membrane; sequence MGNLRHKCVR…PDHGYTSFDS (85 aa). Cysteines 280 and 335 form a disulfide. N-linked (GlcNAc...) asparagine glycans are attached at residues asparagine 283, asparagine 288, asparagine 291, asparagine 318, and asparagine 328. An intramembrane region (pore-forming) is located at residues 358 to 378; it reads FAWAFLALFRLMTQDCWERLY. Topologically, residues 379-386 are extracellular; that stretch reads QQTLRSAG. The helical transmembrane segment at 387–413 threads the bilayer; the sequence is KIYMIFFMLVIFLGSFYLVNLILAVVA. Residues 414-719 are Cytoplasmic-facing; that stretch reads MAYEEQNQAT…VKFVVMDPFA (306 aa). Phosphoserine occurs at positions 457, 460, 483, and 484. Disordered regions lie at residues 461-575 and 610-647; these read LEMS…TQGQ and EATSPGSHLLRPIVLDRPPDTTTPSEEPGGPQMLTPQA. Threonine 486 carries the post-translational modification Phosphothreonine. The segment covering 491 to 503 has biased composition (basic and acidic residues); that stretch reads DDRLPKSDSEDGP. 2 positions are modified to phosphoserine: serine 497 and serine 510. The span at 507 to 528 shows a compositional bias: polar residues; sequence NQLSLTHGLSRTSMRPRSSRGS. A Dimethylated arginine; alternate modification is found at arginine 526. Arginine 526 bears the Omega-N-methylarginine; alternate mark. Residues serine 539 and serine 571 each carry the phosphoserine modification. Residues serine 664 and serine 667 each carry the phosphoserine modification. The stretch at 699–971 is one II repeat; sequence CCPLWMSIKQ…QLALARIQRG (273 aa). The chain crosses the membrane as a helical span at residues 720 to 737; sequence DLTITMCIVLNTLFMALE. Topologically, residues 738–746 are extracellular; it reads HYNMTAEFE. Asparagine 740 is a glycosylation site (N-linked (GlcNAc...) asparagine). Residues 747 to 769 form a helical membrane-spanning segment; sequence EMLQVGNLVFTGIFTAEMTFKII. The Cytoplasmic portion of the chain corresponds to 770 to 775; sequence ALDPYY. A helical transmembrane segment spans residues 776 to 796; it reads YFQQGWNIFDSIIVILSLMEL. Over 797-806 the chain is Extracellular; sequence GLSRMGNLSV. Residue asparagine 803 is glycosylated (N-linked (GlcNAc...) asparagine). A helical membrane pass occupies residues 807 to 821; the sequence is LRSFRLLRVFKLAKS. Residues 822–838 lie on the Cytoplasmic side of the membrane; the sequence is WPTLNTLIKIIGNSVGA. Residues 839–860 traverse the membrane as a helical segment; that stretch reads LGNLTLVLAIIVFIFAVVGMQL. At 861–886 the chain is on the extracellular side; that stretch reads FGKNYSELRHRISDSGLLPRWHMMDF. N-linked (GlcNAc...) asparagine glycosylation occurs at asparagine 864. The segment at residues 887–905 is an intramembrane region (pore-forming); it reads FHAFLIIFRILCGEWIETM. The Extracellular portion of the chain corresponds to 906-914; sequence WDCMEVSGQ. A disulfide bridge links cysteine 908 with cysteine 917. A helical membrane pass occupies residues 915-943; the sequence is SLCLLVFLLVMVIGNLVVLNLFLALLLSS. Topologically, residues 944–1205 are cytoplasmic; the sequence is FSADNLTAPD…LRKTCYRIVE (262 aa). Residues 1000–1144 are disordered; it reads HSQLPSCIAA…EDSYSEGSTA (145 aa). Positions 1017 to 1036 are enriched in basic and acidic residues; sequence EVEKAPPARKETRFEEDKRP. The span at 1056–1075 shows a compositional bias: acidic residues; that stretch reads SDTDDQEEDEENSLGTEEEE. Residues 1098–1115 show a composition bias toward low complexity; sequence SQVSETTSSEAEASTSQA. The stretch at 1189 to 1503 is one III repeat; the sequence is PGKVWWRLRK…KKYYNAMKKL (315 aa). The chain crosses the membrane as a helical span at residues 1206–1227; it reads HSWFETFIIFMILLSSGALAFE. Residues 1228 to 1238 lie on the Extracellular side of the membrane; it reads DIYLEERKTIK. The chain crosses the membrane as a helical span at residues 1239–1261; that stretch reads VLLEYADKMFTYVFVLEMLLKWV. The Cytoplasmic segment spans residues 1262–1270; sequence AYGFKKYFT. The helical transmembrane segment at 1271–1293 threads the bilayer; that stretch reads NAWCWLDFLIVDVSLVSLVANTL. The Extracellular segment spans residues 1294-1299; it reads GFAEMG. The helical transmembrane segment at 1300–1319 threads the bilayer; that stretch reads PIKSLRTLRALRPLRALSRF. Topologically, residues 1320–1332 are cytoplasmic; the sequence is EGMRVVVNALVGA. A helical membrane pass occupies residues 1333-1357; it reads IPSIMNVLLVCLIFWLIFSIMGVNL. Residues 1358-1402 lie on the Extracellular side of the membrane; the sequence is FAGKFGRCINQTEGDLPLNYTIVNNKSECESFNVTGELYWTKVKV. N-linked (GlcNAc...) asparagine glycosylation is found at asparagine 1367, asparagine 1376, asparagine 1382, and asparagine 1390. Residues 1403–1424 constitute an intramembrane region (pore-forming); that stretch reads NFDNVGAGYLALLQVATFKGWM. The Extracellular segment spans residues 1425 to 1447; the sequence is DIMYAAVDSRGYEEQPQWEDNLY. Residues 1448–1472 form a helical membrane-spanning segment; it reads MYIYFVVFIIFGSFFTLNLFIGVII. Residues 1473 to 1530 are Cytoplasmic-facing; sequence DNFNQQKKKLGGQDIFMTEEQKKYYNAMKKLGSKKPQKPIPRPLNKYQGFIFDIVTKQ. Residue serine 1505 is modified to Phosphoserine; by PKC. An IV repeat occupies 1512-1809; it reads IPRPLNKYQG…WEKFDPEATQ (298 aa). A helical transmembrane segment spans residues 1531-1549; it reads AFDVTIMFLICLNMVTMMV. Over 1550-1560 the chain is Extracellular; it reads ETDDQSPEKVN. The chain crosses the membrane as a helical span at residues 1561–1582; the sequence is ILAKINLLFVAIFTGECIVKMA. Over 1583–1591 the chain is Cytoplasmic; that stretch reads ALRHYYFTN. Residues 1592–1614 traverse the membrane as a helical segment; the sequence is SWNIFDFVVVILSIVGTVLSDII. Residues 1615 to 1621 are Extracellular-facing; that stretch reads QKYFFSP. The chain crosses the membrane as a helical span at residues 1622–1642; it reads TLFRVIRLARIGRILRLIRGA. The Cytoplasmic segment spans residues 1643–1652; that stretch reads KGIRTLLFAL. The chain crosses the membrane as a helical span at residues 1653-1681; that stretch reads MMSLPALFNIGLLLFLVMFIYSIFGMANF. Topologically, residues 1682 to 1699 are extracellular; it reads AYVKWEAGIDDMFNFQTF. Positions 1700 to 1716 form an intramembrane region, pore-forming; sequence ANSMLCLFQITTSAGWD. Over 1717–1747 the chain is Extracellular; the sequence is GLLSPILNTGPPYCDPNLPNSNGSRGNCGSP. Residues 1748–1773 form a helical membrane-spanning segment; the sequence is AVGILFFTTYIIISFLIVVNMYIAII. Residues 1774–2019 are Cytoplasmic-facing; sequence LENFSVATEE…SPDRDRESIV (246 aa). An interaction with FGF13 region spans residues 1841–1903; that stretch reads DLPMVSGDRI…ITTTLRRKHE (63 aa). Residues 1903-1932 enclose the IQ domain; it reads EEVSATVIQRAFRRHLLQRSVKHASFLFRQ. Residues 1963–1982 show a composition bias toward low complexity; the sequence is SGPLSSSSISSTSFPPSYDS. The disordered stretch occupies residues 1963–2019; the sequence is SGPLSSSSISSTSFPPSYDSVTRATSDNLPVRASDYSRSEDLADFPPSPDRDRESIV. An interaction with NEDD4, NEDD4L and WWP2 region spans residues 1977–1980; the sequence is PPSY.

The protein belongs to the sodium channel (TC 1.A.1.10) family. Nav1.5/SCN5A subfamily. As to quaternary structure, cannot form the same regulatory interactions with beta subunits as other Navs do. Interacts with the PDZ domain of the syntrophin SNTA1, SNTB1 and SNTB2. Interacts with NEDD4, NEDD4L, WWP2 and GPD1L. Interacts with CALM. Interacts with FGF13; the interaction is direct and may regulate SNC5A density at membranes and function. Interacts with FGF12 and FGF14. Interacts with ANK3. Interacts with PKP2 (via N-terminus). Interacts with TMEM233. Interacts with XIRP2; the interaction is required for normal action potential configuration in the heart. Phosphorylation at Ser-1505 by PKC in a highly conserved cytoplasmic loop slows inactivation of the sodium channel and reduces peak sodium currents. Regulated through phosphorylation by CaMK2D. Post-translationally, ubiquitinated by NEDD4L; which promotes its endocytosis. Does not seem to be ubiquitinated by NEDD4 or WWP2. In terms of processing, lacks the cysteine which covalently binds the conotoxin GVIIJ. This cysteine (position 868) is speculated in other sodium channel subunits alpha to be implied in covalent binding with the sodium channel subunit beta-2 or beta-4. N-glycosylated at Asn-318, probably hinders potential interaction with regulatory subunits. In terms of tissue distribution, expressed in the myocardium (at protein level).

It localises to the cell membrane. It is found in the cytoplasm. Its subcellular location is the perinuclear region. The protein localises to the sarcolemma. The protein resides in the T-tubule. It localises to the cell junction. The catalysed reaction is Na(+)(in) = Na(+)(out). Channel inactivation is regulated by intracellular calcium levels. It is a tetrodotoxin-resistant voltage-gated Na(+) channel (Nav). In terms of biological role, pore-forming subunit of Nav1.5, a voltage-gated sodium (Nav) channel that directly mediates the depolarizing phase of action potentials in excitable membranes. Navs, also called VGSCs (voltage-gated sodium channels) or VDSCs (voltage-dependent sodium channels), operate by switching between closed and open conformations depending on the voltage difference across the membrane. In the open conformation they allow Na(+) ions to selectively pass through the pore, along their electrochemical gradient. The influx of Na(+) ions provokes membrane depolarization, initiating the propagation of electrical signals throughout cells and tissues. Nav1.5 is the predominant sodium channel expressed in myocardial cells and it is responsible for the initial upstroke of the action potential in cardiac myocytes, thereby initiating the heartbeat. Required for normal electrical conduction including formation of the infranodal ventricular conduction system and normal action potential configuration, as a result of its interaction with XIRP2. This is Sodium channel protein type 5 subunit alpha from Mus musculus (Mouse).